The sequence spans 357 residues: NAD-dependent protein deacetylase HST2 (357 aa).

Serine 2 carries the post-translational modification N-acetylserine. In terms of domain architecture, Deacetylase sirtuin-type spans 5–284 (TASTEMSVRK…EQLVEELGWQ (280 aa)). NAD(+) contacts are provided by residues 32–52 (GAGI…TGLY) and 115–118 (QNID). Histidine 135 functions as the Proton acceptor in the catalytic mechanism. Residues cysteine 143, cysteine 146, cysteine 170, and cysteine 173 each coordinate Zn(2+). NAD(+) is bound by residues 223–225 (GTS), 248–250 (NLE), and serine 270. The segment covering 317-329 (LDQSEHESADKKD) has biased composition (basic and acidic residues). Residues 317–357 (LDQSEHESADKKDKKLQRLNGHDSDEDGASNSSSSQKAAKE) are disordered. Residue serine 340 is modified to Phosphoserine.

It belongs to the sirtuin family. Class I subfamily. Homotrimer. Monomer. Homotrimeric in its unliganded state. Undergoes a trimer-monomer transition upon acetyl-lysine substrate binding. Requires Zn(2+) as cofactor.

The protein resides in the cytoplasm. The protein localises to the nucleus. It carries out the reaction N(6)-acetyl-L-lysyl-[protein] + NAD(+) + H2O = 2''-O-acetyl-ADP-D-ribose + nicotinamide + L-lysyl-[protein]. With respect to regulation, inhibited by ADP-ribose and nicotinamide. Functionally, NAD-dependent histone deacetylase that is involved in nuclear silencing events. Derepresses subtelomeric silencing and increases repression in nucleolar (rDNA) silencing. Its function is negatively regulated by active nuclear export. The protein is NAD-dependent protein deacetylase HST2 (HST2) of Saccharomyces cerevisiae (strain ATCC 204508 / S288c) (Baker's yeast).